The following is a 396-amino-acid chain: 8-amino-7-oxononanoate synthase (396 aa).

Residue R29 coordinates substrate. 116 to 117 is a binding site for pyridoxal 5'-phosphate; sequence GY. H141 lines the substrate pocket. S187, H215, and T243 together coordinate pyridoxal 5'-phosphate. K246 carries the N6-(pyridoxal phosphate)lysine modification. A substrate-binding site is contributed by T360.

This sequence belongs to the class-II pyridoxal-phosphate-dependent aminotransferase family. BioF subfamily. Homodimer. It depends on pyridoxal 5'-phosphate as a cofactor.

The catalysed reaction is 6-carboxyhexanoyl-[ACP] + L-alanine + H(+) = (8S)-8-amino-7-oxononanoate + holo-[ACP] + CO2. It functions in the pathway cofactor biosynthesis; biotin biosynthesis. In terms of biological role, catalyzes the decarboxylative condensation of pimeloyl-[acyl-carrier protein] and L-alanine to produce 8-amino-7-oxononanoate (AON), [acyl-carrier protein], and carbon dioxide. The chain is 8-amino-7-oxononanoate synthase from Nitrosospira multiformis (strain ATCC 25196 / NCIMB 11849 / C 71).